The following is a 507-amino-acid chain: Nucleoporin p54 (507 aa).

Repeat copies occupy residues 5–6 (FG), 25–26 (FG), 28–29 (FG), 53–54 (FG), 61–62 (FG), 63–64 (FG), 67–68 (FG), 87–88 (FG), and 444–445 (FG). The 9 X 2 AA repeats of F-G stretch occupies residues 5-445 (FGAPSGTSGT…SQIRMQNHFG (441 aa)).

This sequence belongs to the NUP54 family. In terms of assembly, component of the p62 complex, a complex composed of NUP62, NUP54, and the isoform p58 and isoform p45 of NUP58. Interacts with NUTF2. In terms of processing, O-glycosylated.

It is found in the nucleus. The protein localises to the nuclear pore complex. It localises to the nucleus membrane. Functionally, component of the nuclear pore complex, a complex required for the trafficking across the nuclear membrane. This chain is Nucleoporin p54 (NUP54), found in Homo sapiens (Human).